Here is a 227-residue protein sequence, read N- to C-terminus: ATP synthase F(0) complex subunit a (227 aa).

Transmembrane regions (helical) follow at residues 14-34 (FLGIPLIALAISIPWLMFPTP), 69-89 (WAILFTALMLFLITINLLGLL), 99-119 (LSLNMAFALPLWLTTVLIGMF), 139-159 (VPVLIIIETISLFIRPLALGV), 165-185 (LTAGHLLMQLIATAAFVLLTM), and 190-210 (ALLTSLVLFLLTILEVAVAMI).

The protein belongs to the ATPase A chain family. In terms of assembly, component of the ATP synthase complex composed at least of ATP5F1A/subunit alpha, ATP5F1B/subunit beta, ATP5MC1/subunit c (homooctomer), MT-ATP6/subunit a, MT-ATP8/subunit 8, ATP5ME/subunit e, ATP5MF/subunit f, ATP5MG/subunit g, ATP5MK/subunit k, ATP5MJ/subunit j, ATP5F1C/subunit gamma, ATP5F1D/subunit delta, ATP5F1E/subunit epsilon, ATP5PF/subunit F6, ATP5PB/subunit b, ATP5PD/subunit d, ATP5PO/subunit OSCP. ATP synthase complex consists of a soluble F(1) head domain (subunits alpha(3) and beta(3)) - the catalytic core - and a membrane F(0) domain - the membrane proton channel (subunits c, a, 8, e, f, g, k and j). These two domains are linked by a central stalk (subunits gamma, delta, and epsilon) rotating inside the F1 region and a stationary peripheral stalk (subunits F6, b, d, and OSCP). Interacts with DNAJC30; interaction is direct.

It localises to the mitochondrion inner membrane. It catalyses the reaction H(+)(in) = H(+)(out). Its function is as follows. Subunit a, of the mitochondrial membrane ATP synthase complex (F(1)F(0) ATP synthase or Complex V) that produces ATP from ADP in the presence of a proton gradient across the membrane which is generated by electron transport complexes of the respiratory chain. ATP synthase complex consist of a soluble F(1) head domain - the catalytic core - and a membrane F(1) domain - the membrane proton channel. These two domains are linked by a central stalk rotating inside the F(1) region and a stationary peripheral stalk. During catalysis, ATP synthesis in the catalytic domain of F(1) is coupled via a rotary mechanism of the central stalk subunits to proton translocation. With the subunit c (ATP5MC1), forms the proton-conducting channel in the F(0) domain, that contains two crucial half-channels (inlet and outlet) that facilitate proton movement from the mitochondrial intermembrane space (IMS) into the matrix. Protons are taken up via the inlet half-channel and released through the outlet half-channel, following a Grotthuss mechanism. The chain is ATP synthase F(0) complex subunit a from Scyliorhinus canicula (Small-spotted catshark).